Reading from the N-terminus, the 267-residue chain is Kit ligand (267 aa).

The signal sequence occupies residues Met-1–Thr-25. Gln-26 carries the pyrrolidone carboxylic acid modification. Over Gln-26–Gln-215 the chain is Extracellular. Cystine bridges form between Cys-29–Cys-114 and Cys-68–Cys-164. N-linked (GlcNAc...) asparagine glycosylation is found at Asn-90, Asn-97, Asn-145, and Asn-196. Residues Trp-216–Trp-238 traverse the membrane as a helical segment. The Cytoplasmic portion of the chain corresponds to Lys-239–Lys-267.

This sequence belongs to the SCF family. As to quaternary structure, homodimer, non-covalently linked. Heterotetramer with KIT, binding two KIT molecules; thereby mediates KIT dimerization and subsequent activation by autophosphorylation. In terms of processing, a soluble form is produced by proteolytic processing of the extracellular domain.

It is found in the cytoplasm. The protein resides in the cytoskeleton. It localises to the cell membrane. Its subcellular location is the cell projection. The protein localises to the lamellipodium. It is found in the filopodium. The protein resides in the secreted. Functionally, ligand for the receptor-type protein-tyrosine kinase KIT. Plays an essential role in the regulation of cell survival and proliferation, hematopoiesis, stem cell maintenance, gametogenesis, mast cell development, migration and function, and in melanogenesis. KITLG/SCF binding can activate several signaling pathways. Promotes phosphorylation of PIK3R1, the regulatory subunit of phosphatidylinositol 3-kinase, and subsequent activation of the kinase AKT1. KITLG/SCF and KIT also transmit signals via GRB2 and activation of RAS, RAF1 and the MAP kinases MAPK1/ERK2 and/or MAPK3/ERK1. KITLG/SCF and KIT promote activation of STAT family members STAT1, STAT3 and STAT5. KITLG/SCF and KIT promote activation of PLCG1, leading to the production of the cellular signaling molecules diacylglycerol and inositol 1,4,5-trisphosphate. KITLG/SCF acts synergistically with other cytokines, probably interleukins. In Ovis aries (Sheep), this protein is Kit ligand (KITLG).